Consider the following 488-residue polypeptide: ATP synthase subunit beta (488 aa).

Position 164–171 (164–171) interacts with ATP; the sequence is GGAGVGKT.

Belongs to the ATPase alpha/beta chains family. As to quaternary structure, F-type ATPases have 2 components, CF(1) - the catalytic core - and CF(0) - the membrane proton channel. CF(1) has five subunits: alpha(3), beta(3), gamma(1), delta(1), epsilon(1). CF(0) has four main subunits: a(1), b(1), b'(1) and c(9-12).

The protein localises to the cellular thylakoid membrane. It carries out the reaction ATP + H2O + 4 H(+)(in) = ADP + phosphate + 5 H(+)(out). In terms of biological role, produces ATP from ADP in the presence of a proton gradient across the membrane. The catalytic sites are hosted primarily by the beta subunits. The sequence is that of ATP synthase subunit beta from Prochlorococcus marinus (strain NATL1A).